Reading from the N-terminus, the 239-residue chain is Ribosomal RNA small subunit methyltransferase G (239 aa).

S-adenosyl-L-methionine is bound by residues G77, F82, 128-129, and R147; that span reads AE. The interval 215–239 is disordered; sequence IRKTKSTPKKYPRKPGTPNKSPIEG. Residues 216 to 227 are compositionally biased toward basic residues; sequence RKTKSTPKKYPR.

The protein belongs to the methyltransferase superfamily. RNA methyltransferase RsmG family.

The protein resides in the cytoplasm. In terms of biological role, specifically methylates the N7 position of guanine in position 535 of 16S rRNA. This is Ribosomal RNA small subunit methyltransferase G from Bacillus velezensis (strain DSM 23117 / BGSC 10A6 / LMG 26770 / FZB42) (Bacillus amyloliquefaciens subsp. plantarum).